Reading from the N-terminus, the 349-residue chain is Phenylalanine--tRNA ligase alpha subunit (349 aa).

E258 lines the Mg(2+) pocket.

It belongs to the class-II aminoacyl-tRNA synthetase family. Phe-tRNA synthetase alpha subunit type 1 subfamily. In terms of assembly, tetramer of two alpha and two beta subunits. Mg(2+) is required as a cofactor.

The protein resides in the cytoplasm. It carries out the reaction tRNA(Phe) + L-phenylalanine + ATP = L-phenylalanyl-tRNA(Phe) + AMP + diphosphate + H(+). This chain is Phenylalanine--tRNA ligase alpha subunit, found in Rickettsia rickettsii (strain Sheila Smith).